A 439-amino-acid polypeptide reads, in one-letter code: ATP-dependent RNA helicase RhlB (439 aa).

The Q motif signature appears at 9-37; the sequence is QKFADLPLHPEVKQALAENGFEFCTPIQA. The 180-residue stretch at 40 to 219 folds into the Helicase ATP-binding domain; the sequence is LPVLLQSKDI…YDHMNDPVKV (180 aa). An ATP-binding site is contributed by 53–60; sequence AQTGTGKT. Positions 165–168 match the DEAD box motif; it reads DEAD. Residues 243–390 form the Helicase C-terminal domain; that stretch reads KMRLLLTLIE…VSNYDSSALL (148 aa). The tract at residues 398-439 is disordered; that stretch reads KIPRKHPAGTRNLRERAGAGRPQGAHRSGGRPPRHDRTRRHS. Over residues 425 to 439 the composition is skewed to basic residues; it reads SGGRPPRHDRTRRHS.

It belongs to the DEAD box helicase family. RhlB subfamily. In terms of assembly, component of the RNA degradosome, which is a multiprotein complex involved in RNA processing and mRNA degradation.

The protein localises to the cytoplasm. It carries out the reaction ATP + H2O = ADP + phosphate + H(+). Its function is as follows. DEAD-box RNA helicase involved in RNA degradation. Has RNA-dependent ATPase activity and unwinds double-stranded RNA. This chain is ATP-dependent RNA helicase RhlB, found in Shewanella putrefaciens (strain CN-32 / ATCC BAA-453).